We begin with the raw amino-acid sequence, 467 residues long: Cobyrinate a,c-diamide synthase (467 aa).

Residues 256-449 (RVGYAADQAF…AHIHVEGAPE (194 aa)) form the GATase cobBQ-type domain. Catalysis depends on Cys338, which acts as the Nucleophile.

Belongs to the CobB/CbiA family. Requires Mg(2+) as cofactor.

The enzyme catalyses cob(II)yrinate + 2 L-glutamine + 2 ATP + 2 H2O = cob(II)yrinate a,c diamide + 2 L-glutamate + 2 ADP + 2 phosphate + 2 H(+). The protein operates within cofactor biosynthesis; adenosylcobalamin biosynthesis; cob(II)yrinate a,c-diamide from sirohydrochlorin (anaerobic route): step 10/10. Its function is as follows. Catalyzes the ATP-dependent amidation of the two carboxylate groups at positions a and c of cobyrinate, using either L-glutamine or ammonia as the nitrogen source. In Magnetococcus marinus (strain ATCC BAA-1437 / JCM 17883 / MC-1), this protein is Cobyrinate a,c-diamide synthase.